Here is a 316-residue protein sequence, read N- to C-terminus: Phosphatidylglycerol--prolipoprotein diacylglyceryl transferase (316 aa).

Transmembrane regions (helical) follow at residues 18–38 (PIPI…AIWL), 47–67 (GGNP…GIIG), and 95–115 (NGGL…AVFF). A 1,2-diacyl-sn-glycero-3-phospho-(1'-sn-glycerol) is bound at residue arginine 141. The next 2 helical transmembrane spans lie at 188 to 208 (VHPT…LLMW) and 251 to 271 (INTI…FLLK). Residues 292-316 (AVASPDGKPLPKAGEGIDGETPSTR) form a disordered region.

The protein belongs to the Lgt family.

The protein resides in the cell membrane. It carries out the reaction L-cysteinyl-[prolipoprotein] + a 1,2-diacyl-sn-glycero-3-phospho-(1'-sn-glycerol) = an S-1,2-diacyl-sn-glyceryl-L-cysteinyl-[prolipoprotein] + sn-glycerol 1-phosphate + H(+). The protein operates within protein modification; lipoprotein biosynthesis (diacylglyceryl transfer). Its function is as follows. Catalyzes the transfer of the diacylglyceryl group from phosphatidylglycerol to the sulfhydryl group of the N-terminal cysteine of a prolipoprotein, the first step in the formation of mature lipoproteins. The protein is Phosphatidylglycerol--prolipoprotein diacylglyceryl transferase of Corynebacterium glutamicum (strain ATCC 13032 / DSM 20300 / JCM 1318 / BCRC 11384 / CCUG 27702 / LMG 3730 / NBRC 12168 / NCIMB 10025 / NRRL B-2784 / 534).